Here is a 269-residue protein sequence, read N- to C-terminus: Enoyl-[acyl-carrier-protein] reductase [NADH] (269 aa).

Residues 20-21 (SI), 64-65 (DV), and 95-96 (IG) contribute to the NAD(+) site. Y158 is a substrate binding site. NAD(+) contacts are provided by K165 and I194.

The protein belongs to the short-chain dehydrogenases/reductases (SDR) family. FabI subfamily. In terms of assembly, homodimer. Homotetramer.

It catalyses the reaction a 2,3-saturated acyl-[ACP] + NAD(+) = a (2E)-enoyl-[ACP] + NADH + H(+). The catalysed reaction is a 2,3-saturated acyl-CoA + NAD(+) = a (2E)-enoyl-CoA + NADH + H(+). It functions in the pathway lipid metabolism; mycolic acid biosynthesis. Functionally, enoyl-ACP reductase of the type II fatty acid syntase (FAS-II) system, which is involved in the biosynthesis of mycolic acids, a major component of mycobacterial cell walls. Catalyzes the NADH-dependent reduction of the double bond of 2-trans-enoyl-[acyl-carrier protein], an essential step in the fatty acid elongation cycle of the FAS-II pathway. Shows preference for long-chain fatty acyl thioester substrates, and can also use 2-trans-enoyl-CoAs as alternative substrates. The mycobacterial FAS-II system utilizes the products of the FAS-I system as primers to extend fatty acyl chain lengths up to C56, forming the meromycolate chain that serves as the precursor for final mycolic acids. In terms of biological role, is the primary target of the first-line antitubercular drug isoniazid (INH) and of the second-line drug ethionamide (ETH). Overexpressed inhA confers INH and ETH resistance to M.bovis. The mechanism of isoniazid action against InhA is covalent attachment of the activated form of the drug to the nicotinamide ring of NAD and binding of the INH-NAD adduct to the active site of InhA. Similarly, the ETH-NAD adduct binds InhA. This Mycobacterium bovis (strain ATCC BAA-935 / AF2122/97) protein is Enoyl-[acyl-carrier-protein] reductase [NADH].